A 762-amino-acid polypeptide reads, in one-letter code: Protein PHTF1 (762 aa).

In terms of domain architecture, PHTF spans 6 to 150; the sequence is RDAISWYQKK…VHCQIVSTQI (145 aa). 3 helical membrane passes run 77–97, 99–119, and 121–141; these read GLVRVVFFPLFSSWWIQVTSL, IFVWLLLLYLMQVIALVLYFM, and PIVNVSEVLGPLCLMLLMGTV. Positions 152-188 are disordered; the sequence is RPSGNNGNRRRRKLRKTVNGDGSRENGNNSSDKARGV. 3 N-linked (GlcNAc...) asparagine glycosylation sites follow: asparagine 179, asparagine 180, and asparagine 197. Phosphoserine is present on residues serine 272, serine 276, serine 277, serine 334, and serine 336. 2 disordered regions span residues 344-379 and 393-415; these read SAAFSQGSRSGMSGGSRSLNMLRRDSESTRHDSETE and RSSVTSDSEGAHVSSLHSGTKRD. The span at 348–361 shows a compositional bias: low complexity; sequence SQGSRSGMSGGSRS. The span at 365–376 shows a compositional bias: basic and acidic residues; the sequence is LRRDSESTRHDS. N-linked (GlcNAc...) asparagine glycosylation occurs at asparagine 431. Transmembrane regions (helical) follow at residues 473–493, 512–532, 611–631, and 645–665; these read GVGYQMLGNIVTIGLAFFPFL, EILTLFCGAPPVTPIIILSII, VVVSSVFLLTLSIAFICCAQV, and WEFLIWESALLLFLLRLASLG. Asparagine 674 and asparagine 733 each carry an N-linked (GlcNAc...) asparagine glycan. The helical transmembrane segment at 737–757 threads the bilayer; it reads VVILSAVSGVISDLLGFNIRL.

In terms of assembly, interacts with FEM1B.

The protein localises to the endoplasmic reticulum membrane. The protein resides in the golgi apparatus. Its subcellular location is the cis-Golgi network membrane. This is Protein PHTF1 (PHTF1) from Bos taurus (Bovine).